Reading from the N-terminus, the 173-residue chain is 6,7-dimethyl-8-ribityllumazine synthase (173 aa).

Residues Phe24, 58–60 (ALE), and 82–84 (AVI) contribute to the 5-amino-6-(D-ribitylamino)uracil site. Residue 87 to 88 (ET) participates in (2S)-2-hydroxy-3-oxobutyl phosphate binding. Residue His90 is the Proton donor of the active site. Asn115 is a 5-amino-6-(D-ribitylamino)uracil binding site. A (2S)-2-hydroxy-3-oxobutyl phosphate-binding site is contributed by Arg129. Residues 150-173 (TLDQLSDDEEDEEDEDDEDEEERA) form a disordered region. The span at 154 to 173 (LSDDEEDEEDEDDEDEEERA) shows a compositional bias: acidic residues.

Belongs to the DMRL synthase family.

The enzyme catalyses (2S)-2-hydroxy-3-oxobutyl phosphate + 5-amino-6-(D-ribitylamino)uracil = 6,7-dimethyl-8-(1-D-ribityl)lumazine + phosphate + 2 H2O + H(+). Its pathway is cofactor biosynthesis; riboflavin biosynthesis; riboflavin from 2-hydroxy-3-oxobutyl phosphate and 5-amino-6-(D-ribitylamino)uracil: step 1/2. Functionally, catalyzes the formation of 6,7-dimethyl-8-ribityllumazine by condensation of 5-amino-6-(D-ribitylamino)uracil with 3,4-dihydroxy-2-butanone 4-phosphate. This is the penultimate step in the biosynthesis of riboflavin. The sequence is that of 6,7-dimethyl-8-ribityllumazine synthase from Burkholderia mallei (strain NCTC 10247).